Here is a 339-residue protein sequence, read N- to C-terminus: NADH-quinone oxidoreductase subunit H (339 aa).

8 consecutive transmembrane segments (helical) span residues 9 to 29 (IFPL…LILC), 82 to 102 (ILFV…WAVI), 115 to 135 (VGVL…IIAG), 161 to 181 (MGLV…SQIV), 187 to 207 (MPWW…ISVL), 235 to 255 (MGFA…SAMT), 275 to 295 (IPGF…FLWI), and 311 to 331 (GWKV…SVLI).

This sequence belongs to the complex I subunit 1 family. As to quaternary structure, NDH-1 is composed of 14 different subunits. Subunits NuoA, H, J, K, L, M, N constitute the membrane sector of the complex.

It localises to the cell inner membrane. The enzyme catalyses a quinone + NADH + 5 H(+)(in) = a quinol + NAD(+) + 4 H(+)(out). In terms of biological role, NDH-1 shuttles electrons from NADH, via FMN and iron-sulfur (Fe-S) centers, to quinones in the respiratory chain. The immediate electron acceptor for the enzyme in this species is believed to be ubiquinone. Couples the redox reaction to proton translocation (for every two electrons transferred, four hydrogen ions are translocated across the cytoplasmic membrane), and thus conserves the redox energy in a proton gradient. This subunit may bind ubiquinone. The protein is NADH-quinone oxidoreductase subunit H of Rickettsia bellii (strain OSU 85-389).